Here is a 123-residue protein sequence, read N- to C-terminus: Large ribosomal subunit protein bL19 (123 aa).

The protein belongs to the bacterial ribosomal protein bL19 family.

Its function is as follows. This protein is located at the 30S-50S ribosomal subunit interface and may play a role in the structure and function of the aminoacyl-tRNA binding site. This chain is Large ribosomal subunit protein bL19, found in Laribacter hongkongensis (strain HLHK9).